The following is a 175-amino-acid chain: uncharacterized protein (175 aa).

The protein localises to the cytoplasm. It is found in the nucleus. This is an uncharacterized protein from Schizosaccharomyces pombe (strain 972 / ATCC 24843) (Fission yeast).